We begin with the raw amino-acid sequence, 298 residues long: Glycine--tRNA ligase alpha subunit (298 aa).

This sequence belongs to the class-II aminoacyl-tRNA synthetase family. In terms of assembly, tetramer of two alpha and two beta subunits.

It is found in the cytoplasm. The enzyme catalyses tRNA(Gly) + glycine + ATP = glycyl-tRNA(Gly) + AMP + diphosphate. The protein is Glycine--tRNA ligase alpha subunit of Lacticaseibacillus paracasei (strain ATCC 334 / BCRC 17002 / CCUG 31169 / CIP 107868 / KCTC 3260 / NRRL B-441) (Lactobacillus paracasei).